We begin with the raw amino-acid sequence, 729 residues long: Rho GTPase-activating protein 28 (729 aa).

The segment at 1 to 78 (MEVEDSGGVV…ASVDSSASME (78 aa)) is disordered. The segment covering 37 to 49 (LSRKSIPRCRRIN) has biased composition (basic residues). Residues 63-76 (SRSNSQASVDSSAS) are compositionally biased toward low complexity. The residue at position 70 (Ser70) is a Phosphoserine. Thr164 carries the phosphothreonine modification. Residues 180–234 (FGVSESPPSDSCEHATQLDGTKEEKDLPGVTKTSRPLPDDASLSSTTLSNGAQDE) form a disordered region. Positions 221–231 (SLSSTTLSNGA) are enriched in polar residues. The Rho-GAP domain maps to 384–581 (VPLTVLLDND…LMLKYQKILW (198 aa)).

GTPase activator for the Rho-type GTPases by converting them to an inactive GDP-bound state. The protein is Rho GTPase-activating protein 28 (Arhgap28) of Mus musculus (Mouse).